A 698-amino-acid chain; its full sequence is MYKSFSMELAGRTLSVDVGRVAAQANGAAFMHYGDTVVLSTATASDKPREGIDFFPLSVEYEEKLYAVGKVPGGFNKREGKASENAILTSRVIDRPMRPLFPKDYRNDVTLNNLVMSVDPDCSPELTAMLGSAISVAISDIPFDGPCATTQVGLVDGELVFNPTAAQKAVSDLALTVASTRDKVIMIEAGANEVPEDKMLEAIFAAHEVNQEVIQFIDKIVAEFGKEKHGYISCEIPEEMFAAIKEVVTPEQMEEAVFTDVKQVREENIREIKNKLAEVFEESNPEWLHLIDEAVYKYQKKTVRKMILKDHKRPDGREIHQIRRLAAEVDMLPRVHGSGMFTRGQTQILTVTTLAPLSEAQKLDGLDEAEKSKRYMHHYNFPSYSVGETKPSRGPGRREIGHGALAERALIPVLPSEAEFPYAIRTVSETMESNGSTSQASVCASTLSLMAAGVPIKKQVAGISCGLVTGDTDDDYLVLTDIQGLEDFFGDMDFKVAGTHDGITAIQMDIKIHGLTRAIIEEAIRRTKEAREYIINEVMTPAIAEPRTEVGKYAPKIIQIQIDPQKIGDVVGQRGKTINAIIEQTGVKIDINDEGAVSVCGTDKDMMDKAINMIRTIVTEFEEGQVFEGKVISIKEFGAFLEFAPGKEGMVHISKISKERINHVEDVLTLGDVVKVVCLGKDKMGRISFSIKDYKEEN.

Mg(2+) is bound by residues Asp487 and Asp493. Residues Pro555–Ile614 form the KH domain. Positions Gly624–Lys692 constitute an S1 motif domain.

Belongs to the polyribonucleotide nucleotidyltransferase family. Mg(2+) serves as cofactor.

The protein localises to the cytoplasm. It catalyses the reaction RNA(n+1) + phosphate = RNA(n) + a ribonucleoside 5'-diphosphate. Involved in mRNA degradation. Catalyzes the phosphorolysis of single-stranded polyribonucleotides processively in the 3'- to 5'-direction. In Lachnoclostridium phytofermentans (strain ATCC 700394 / DSM 18823 / ISDg) (Clostridium phytofermentans), this protein is Polyribonucleotide nucleotidyltransferase.